A 150-amino-acid chain; its full sequence is D-aminoacyl-tRNA deacylase (150 aa).

The Gly-cisPro motif, important for rejection of L-amino acids signature appears at 136 to 137 (GP).

Belongs to the DTD family. As to quaternary structure, homodimer.

The protein localises to the cytoplasm. It carries out the reaction glycyl-tRNA(Ala) + H2O = tRNA(Ala) + glycine + H(+). The enzyme catalyses a D-aminoacyl-tRNA + H2O = a tRNA + a D-alpha-amino acid + H(+). An aminoacyl-tRNA editing enzyme that deacylates mischarged D-aminoacyl-tRNAs. Also deacylates mischarged glycyl-tRNA(Ala), protecting cells against glycine mischarging by AlaRS. Acts via tRNA-based rather than protein-based catalysis; rejects L-amino acids rather than detecting D-amino acids in the active site. By recycling D-aminoacyl-tRNA to D-amino acids and free tRNA molecules, this enzyme counteracts the toxicity associated with the formation of D-aminoacyl-tRNA entities in vivo and helps enforce protein L-homochirality. In Staphylococcus aureus (strain Mu50 / ATCC 700699), this protein is D-aminoacyl-tRNA deacylase.